Here is a 380-residue protein sequence, read N- to C-terminus: Alkanesulfonate monooxygenase (380 aa).

Belongs to the SsuD family. As to quaternary structure, homotetramer.

The catalysed reaction is an alkanesulfonate + FMNH2 + O2 = an aldehyde + FMN + sulfite + H2O + 2 H(+). Functionally, catalyzes the desulfonation of aliphatic sulfonates. The chain is Alkanesulfonate monooxygenase from Pectobacterium atrosepticum (strain SCRI 1043 / ATCC BAA-672) (Erwinia carotovora subsp. atroseptica).